Reading from the N-terminus, the 279-residue chain is NAD kinase (279 aa).

The active-site Proton acceptor is the D57. NAD(+)-binding positions include 57 to 58, 133 to 134, R159, D161, and 172 to 177; these read DG, NE, and TAYNKS.

Belongs to the NAD kinase family. A divalent metal cation serves as cofactor.

The protein localises to the cytoplasm. It catalyses the reaction NAD(+) + ATP = ADP + NADP(+) + H(+). Involved in the regulation of the intracellular balance of NAD and NADP, and is a key enzyme in the biosynthesis of NADP. Catalyzes specifically the phosphorylation on 2'-hydroxyl of the adenosine moiety of NAD to yield NADP. The chain is NAD kinase from Streptococcus pyogenes serotype M12 (strain MGAS2096).